Here is an 897-residue protein sequence, read N- to C-terminus: Schlafen family member 13 (897 aa).

The segment at 2–355 (EANHCSLGVY…WVEKMMDADP (354 aa)) is n'-domain region. Residues E208 and E213 contribute to the active site. Residues H284, C286, and C321 each contribute to the Zn(2+) site. 599 to 606 (GLPGSGKT) contacts ATP.

This sequence belongs to the Schlafen family. Subgroup III subfamily. Mg(2+) serves as cofactor.

The protein resides in the cytoplasm. Its function is as follows. Endoribonuclease that cleaves tRNAs and rRNAs. Cleaves tRNAs 11 nucleotides from the 3'-terminus at the acceptor stem. Does not act on tRNA(Sec). Able to restrict HIV-1 virus replication; ability to inhibit HIV-1 replication is dependent on endoribonuclease activity. The polypeptide is Schlafen family member 13 (Homo sapiens (Human)).